We begin with the raw amino-acid sequence, 255 residues long: 1-(5-phosphoribosyl)-5-[(5-phosphoribosylamino)methylideneamino] imidazole-4-carboxamide isomerase (255 aa).

Residue Asp8 is the Proton acceptor of the active site. Asp129 (proton donor) is an active-site residue.

The protein belongs to the HisA/HisF family.

It is found in the cytoplasm. It carries out the reaction 1-(5-phospho-beta-D-ribosyl)-5-[(5-phospho-beta-D-ribosylamino)methylideneamino]imidazole-4-carboxamide = 5-[(5-phospho-1-deoxy-D-ribulos-1-ylimino)methylamino]-1-(5-phospho-beta-D-ribosyl)imidazole-4-carboxamide. Its pathway is amino-acid biosynthesis; L-histidine biosynthesis; L-histidine from 5-phospho-alpha-D-ribose 1-diphosphate: step 4/9. The chain is 1-(5-phosphoribosyl)-5-[(5-phosphoribosylamino)methylideneamino] imidazole-4-carboxamide isomerase from Parasynechococcus marenigrum (strain WH8102).